Here is a 244-residue protein sequence, read N- to C-terminus: Phosphoadenosine 5'-phosphosulfate reductase (244 aa).

Cys239 acts as the Nucleophile; cysteine thiosulfonate intermediate in catalysis.

This sequence belongs to the PAPS reductase family. CysH subfamily.

It is found in the cytoplasm. The enzyme catalyses [thioredoxin]-disulfide + sulfite + adenosine 3',5'-bisphosphate + 2 H(+) = [thioredoxin]-dithiol + 3'-phosphoadenylyl sulfate. It functions in the pathway sulfur metabolism; hydrogen sulfide biosynthesis; sulfite from sulfate: step 3/3. Its function is as follows. Catalyzes the formation of sulfite from phosphoadenosine 5'-phosphosulfate (PAPS) using thioredoxin as an electron donor. This is Phosphoadenosine 5'-phosphosulfate reductase from Shigella flexneri.